The sequence spans 217 residues: Ribosomal RNA large subunit methyltransferase E (217 aa).

Residues Gly-64, Trp-66, Asp-92, Asp-108, and Asp-133 each contribute to the S-adenosyl-L-methionine site. The active-site Proton acceptor is Lys-173.

Belongs to the class I-like SAM-binding methyltransferase superfamily. RNA methyltransferase RlmE family.

It localises to the cytoplasm. It carries out the reaction uridine(2552) in 23S rRNA + S-adenosyl-L-methionine = 2'-O-methyluridine(2552) in 23S rRNA + S-adenosyl-L-homocysteine + H(+). In terms of biological role, specifically methylates the uridine in position 2552 of 23S rRNA at the 2'-O position of the ribose in the fully assembled 50S ribosomal subunit. This is Ribosomal RNA large subunit methyltransferase E from Delftia acidovorans (strain DSM 14801 / SPH-1).